The primary structure comprises 351 residues: Large ribosomal subunit protein uL3 (351 aa).

Disordered regions lie at residues 1 to 31 (MGHR…TPRT) and 246 to 271 (KGSR…GQLG).

Belongs to the universal ribosomal protein uL3 family. As to quaternary structure, part of the 50S ribosomal subunit. Forms a cluster with proteins L14 and L24e.

Functionally, one of the primary rRNA binding proteins, it binds directly near the 3'-end of the 23S rRNA, where it nucleates assembly of the 50S subunit. This chain is Large ribosomal subunit protein uL3, found in Saccharolobus islandicus (strain M.14.25 / Kamchatka #1) (Sulfolobus islandicus).